The chain runs to 221 residues: Probable lipoprotein CT_734 (221 aa).

The N-terminal stretch at 1–24 (MKKFIYKYSFGALLLLSGLSGLSS) is a signal peptide. Residue C25 is the site of N-palmitoyl cysteine attachment. The S-diacylglycerol cysteine moiety is linked to residue C25.

It belongs to the chlamydial CPn_0875/CT_734/TC_0107 family.

The protein resides in the cell membrane. The protein is Probable lipoprotein CT_734 of Chlamydia trachomatis serovar D (strain ATCC VR-885 / DSM 19411 / UW-3/Cx).